Reading from the N-terminus, the 205-residue chain is Small ribosomal subunit protein uS4 (205 aa).

The segment covering 1–16 (MSKRESSKYKIDRRMG) has biased composition (basic and acidic residues). Residues 1–46 (MSKRESSKYKIDRRMGENIWGRPKSPVNRREYGPGQHGQRRKSKLS) form a disordered region. Residues 94-157 (SRLDAIVYRA…KQLVTVLEAV (64 aa)) enclose the S4 RNA-binding domain.

The protein belongs to the universal ribosomal protein uS4 family. Part of the 30S ribosomal subunit. Contacts protein S5. The interaction surface between S4 and S5 is involved in control of translational fidelity.

Functionally, one of the primary rRNA binding proteins, it binds directly to 16S rRNA where it nucleates assembly of the body of the 30S subunit. With S5 and S12 plays an important role in translational accuracy. The protein is Small ribosomal subunit protein uS4 of Sinorhizobium medicae (strain WSM419) (Ensifer medicae).